The following is a 727-amino-acid chain: Bromodomain-containing protein C631.02 (727 aa).

Disordered stretches follow at residues 27–231 (AATI…PPMT) and 341–369 (TSYS…AAMY). Residues 56–68 (ENDDGTLDLFGDS) are compositionally biased toward acidic residues. Residues 69 to 78 (ELEKEQKGDN) show a composition bias toward basic and acidic residues. Over residues 102–114 (PSSPTHPSVSNIT) the composition is skewed to polar residues. A compositionally biased stretch (basic and acidic residues) spans 128-150 (EEEKSSESLDSHTHPPKRVRNED). Polar residues predominate over residues 153–177 (LTFSKTSPVSPSSLKDGASNTVTND). Serine 162 carries the post-translational modification Phosphoserine. Over residues 206-231 (SKEHSSPHDETVKKEENDKDQYPPMT) the composition is skewed to basic and acidic residues. Residues 229–335 (PMTKEQHKYI…ATFERQLKQL (107 aa)) enclose the Bromo 1 domain. Residues 388 to 497 (RKDAAEMKFC…SIFQKLWANK (110 aa)) form the Bromo 2 domain. An NET domain is found at 570–650 (RSLSVDIYPP…KGDEIGAEAL (81 aa)). Residues 699–727 (IAAYNTKSLGSDDSSSEDDGESSESSDSA) are disordered. Positions 712-727 (SSSEDDGESSESSDSA) are enriched in acidic residues.

This sequence belongs to the BET family.

It localises to the nucleus. This is Bromodomain-containing protein C631.02 from Schizosaccharomyces pombe (strain 972 / ATCC 24843) (Fission yeast).